A 92-amino-acid chain; its full sequence is Putative membrane protein insertion efficiency factor (92 aa).

It belongs to the UPF0161 family.

The protein localises to the cell membrane. Its function is as follows. Could be involved in insertion of integral membrane proteins into the membrane. This chain is Putative membrane protein insertion efficiency factor, found in Tropheryma whipplei (strain TW08/27) (Whipple's bacillus).